Consider the following 196-residue polypeptide: GSARVSACVASIAKQDYAGELRVYVVDDGSGNRNAIIPVHDHYACDPRFRFILMPKNVGKRKASIVAIGKSSGDLVLNVDSDTTMRRRVASKLASKSRIREDAPTILMRNAGFRTEYVPEAIAETVVPNSMNAYLRQQRRWARSSFADTLAVLLLLGLDRYLTLDEIGGNLGPLLLALSVVSGLAQLALTATVPWS.

Belongs to the NodC/HAS family.

It is found in the cell membrane. In terms of biological role, involved in the synthesis of Nod factor, a sulfated N-acyl-beta-1,4-tetrasaccharide of N-acetylglucosamine which initiates a series of events in the host plant species leading eventually to nodulation. This Rhizobium sp. (strain MPIK3030) protein is N-acetylglucosaminyltransferase (nodC).